The following is a 100-amino-acid chain: Urease subunit gamma (100 aa).

Belongs to the urease gamma subunit family. In terms of assembly, heterotrimer of UreA (gamma), UreB (beta) and UreC (alpha) subunits. Three heterotrimers associate to form the active enzyme.

It localises to the cytoplasm. The enzyme catalyses urea + 2 H2O + H(+) = hydrogencarbonate + 2 NH4(+). Its pathway is nitrogen metabolism; urea degradation; CO(2) and NH(3) from urea (urease route): step 1/1. This chain is Urease subunit gamma, found in Paraburkholderia phytofirmans (strain DSM 17436 / LMG 22146 / PsJN) (Burkholderia phytofirmans).